Reading from the N-terminus, the 116-residue chain is Prefoldin subunit beta (116 aa).

Belongs to the prefoldin subunit beta family. In terms of assembly, heterohexamer of two alpha and four beta subunits.

Its subcellular location is the cytoplasm. Functionally, molecular chaperone capable of stabilizing a range of proteins. Seems to fulfill an ATP-independent, HSP70-like function in archaeal de novo protein folding. This Thermococcus onnurineus (strain NA1) protein is Prefoldin subunit beta.